The sequence spans 359 residues: Phosphoserine aminotransferase (359 aa).

An L-glutamate-binding site is contributed by R42. Residues 76-77, W102, T152, D171, and Q194 each bind pyridoxal 5'-phosphate; that span reads AS. K195 carries the N6-(pyridoxal phosphate)lysine modification. 236-237 lines the pyridoxal 5'-phosphate pocket; that stretch reads NT.

It belongs to the class-V pyridoxal-phosphate-dependent aminotransferase family. SerC subfamily. In terms of assembly, homodimer. Pyridoxal 5'-phosphate is required as a cofactor.

Its subcellular location is the cytoplasm. It catalyses the reaction O-phospho-L-serine + 2-oxoglutarate = 3-phosphooxypyruvate + L-glutamate. The catalysed reaction is 4-(phosphooxy)-L-threonine + 2-oxoglutarate = (R)-3-hydroxy-2-oxo-4-phosphooxybutanoate + L-glutamate. Its pathway is amino-acid biosynthesis; L-serine biosynthesis; L-serine from 3-phospho-D-glycerate: step 2/3. It functions in the pathway cofactor biosynthesis; pyridoxine 5'-phosphate biosynthesis; pyridoxine 5'-phosphate from D-erythrose 4-phosphate: step 3/5. Its function is as follows. Catalyzes the reversible conversion of 3-phosphohydroxypyruvate to phosphoserine and of 3-hydroxy-2-oxo-4-phosphonooxybutanoate to phosphohydroxythreonine. This Ruthia magnifica subsp. Calyptogena magnifica protein is Phosphoserine aminotransferase.